The following is a 177-amino-acid chain: Large ribosomal subunit protein uL6 (177 aa).

This sequence belongs to the universal ribosomal protein uL6 family. As to quaternary structure, part of the 50S ribosomal subunit.

This protein binds to the 23S rRNA, and is important in its secondary structure. It is located near the subunit interface in the base of the L7/L12 stalk, and near the tRNA binding site of the peptidyltransferase center. The chain is Large ribosomal subunit protein uL6 from Rhodospirillum rubrum (strain ATCC 11170 / ATH 1.1.1 / DSM 467 / LMG 4362 / NCIMB 8255 / S1).